A 212-amino-acid polypeptide reads, in one-letter code: Cytidylate kinase (212 aa).

11–19 (GPAASGKGT) serves as a coordination point for ATP. The disordered stretch occupies residues 50–69 (GGDPADPAASEEQARSLSRL).

The protein belongs to the cytidylate kinase family. Type 1 subfamily.

The protein localises to the cytoplasm. It catalyses the reaction CMP + ATP = CDP + ADP. The enzyme catalyses dCMP + ATP = dCDP + ADP. This is Cytidylate kinase from Acidiphilium cryptum (strain JF-5).